A 142-amino-acid chain; its full sequence is Large ribosomal subunit protein uL13 (142 aa).

This sequence belongs to the universal ribosomal protein uL13 family. Part of the 50S ribosomal subunit.

In terms of biological role, this protein is one of the early assembly proteins of the 50S ribosomal subunit, although it is not seen to bind rRNA by itself. It is important during the early stages of 50S assembly. This Pectobacterium carotovorum subsp. carotovorum (strain PC1) protein is Large ribosomal subunit protein uL13.